Reading from the N-terminus, the 208-residue chain is CASP-like protein 2U9 (208 aa).

Topologically, residues 1 to 27 are cytoplasmic; it reads MGVADAPSPGNVPVLGDMKNRSAAEMK. Residues 28–48 traverse the membrane as a helical segment; sequence ISVLALRALTLVLLVIALALM. Residues 49 to 87 are Extracellular-facing; the sequence is VSNKQTQSIPIKLPGMASTIFLKKTATFSQITGVQYYVG. The chain crosses the membrane as a helical span at residues 88–108; that stretch reads ALSVAVAYMFFQMLAGLFTIL. The Cytoplasmic segment spans residues 109–120; that stretch reads TTGSIVGSKSRA. Residues 121-141 traverse the membrane as a helical segment; sequence WVTFILDQLIAYLMVSAATVV. The Extracellular segment spans residues 142 to 168; that stretch reads AEVGYIARRGETKVGWNQVCSDFKHYC. Residues 169–189 form a helical membrane-spanning segment; it reads FIYGFSLVNAFLATIAFLPVV. Over 190 to 208 the chain is Cytoplasmic; that stretch reads AVSAFHLFRMYGAQSAQSK.

Belongs to the Casparian strip membrane proteins (CASP) family. Homodimer and heterodimers.

The protein resides in the cell membrane. The polypeptide is CASP-like protein 2U9 (Selaginella moellendorffii (Spikemoss)).